The primary structure comprises 353 residues: Photosystem II D2 protein (353 aa).

N-acetylthreonine is present on T2. T2 bears the Phosphothreonine mark. Residues 41 to 61 form a helical membrane-spanning segment; sequence CAYFALGGWFTGTTFVTSWYT. A chlorophyll a-binding site is contributed by H118. The helical transmembrane segment at 125–141 threads the bilayer; sequence GFMLRQFELARSVQLRP. Residues Q130 and N143 each coordinate pheophytin a. The helical transmembrane segment at 153–166 threads the bilayer; it reads VFVSVFLIYPLGQS. H198 provides a ligand contact to chlorophyll a. The chain crosses the membrane as a helical span at residues 208–228; the sequence is AALLCAIHGATVENTLFEDGD. The a plastoquinone site is built by H215 and F262. H215 is a binding site for Fe cation. H269 is a Fe cation binding site. The chain crosses the membrane as a helical span at residues 279 to 295; it reads GLWMSALGVVGLALNLR.

Belongs to the reaction center PufL/M/PsbA/D family. As to quaternary structure, PSII is composed of 1 copy each of membrane proteins PsbA, PsbB, PsbC, PsbD, PsbE, PsbF, PsbH, PsbI, PsbJ, PsbK, PsbL, PsbM, PsbT, PsbX, PsbY, PsbZ, Psb30/Ycf12, at least 3 peripheral proteins of the oxygen-evolving complex and a large number of cofactors. It forms dimeric complexes. Requires The D1/D2 heterodimer binds P680, chlorophylls that are the primary electron donor of PSII, and subsequent electron acceptors. It shares a non-heme iron and each subunit binds pheophytin, quinone, additional chlorophylls, carotenoids and lipids. There is also a Cl(-1) ion associated with D1 and D2, which is required for oxygen evolution. The PSII complex binds additional chlorophylls, carotenoids and specific lipids. as cofactor.

It is found in the plastid. The protein localises to the chloroplast thylakoid membrane. It catalyses the reaction 2 a plastoquinone + 4 hnu + 2 H2O = 2 a plastoquinol + O2. Functionally, photosystem II (PSII) is a light-driven water:plastoquinone oxidoreductase that uses light energy to abstract electrons from H(2)O, generating O(2) and a proton gradient subsequently used for ATP formation. It consists of a core antenna complex that captures photons, and an electron transfer chain that converts photonic excitation into a charge separation. The D1/D2 (PsbA/PsbD) reaction center heterodimer binds P680, the primary electron donor of PSII as well as several subsequent electron acceptors. D2 is needed for assembly of a stable PSII complex. This Platanus occidentalis (Sycamore) protein is Photosystem II D2 protein.